Reading from the N-terminus, the 182-residue chain is Ribosome maturation factor RimP (182 aa).

This sequence belongs to the RimP family.

The protein resides in the cytoplasm. In terms of biological role, required for maturation of 30S ribosomal subunits. This Corynebacterium efficiens (strain DSM 44549 / YS-314 / AJ 12310 / JCM 11189 / NBRC 100395) protein is Ribosome maturation factor RimP.